Here is a 668-residue protein sequence, read N- to C-terminus: Acyl-CoA-binding domain-containing protein 4 (668 aa).

The 95-residue stretch at Y12–S106 folds into the ACB domain. An acyl-CoA is bound by residues K33, Y48–Q52, and K74. Kelch repeat units follow at residues K195–A242, K255–K305, L307–E356, F358–E407, N408–S456, and V463–A508. Residues S515 and S520 each carry the phosphoserine modification. A coiled-coil region spans residues K538–Q647. Residues Q639–P668 are disordered.

It belongs to the ACBP family. Interacts with RAP2-3/EBP, an ethylene-responsive element binding protein. Mostly expressed in roots, stems, and leaves, and, to a lower extent, in flowers and siliques.

The protein localises to the cytoplasm. Binds medium- and long-chain acyl-CoA esters with very high affinity. Can interact in vitro with oleoyl-CoA, barely with palmitoyl-CoA, but not with arachidonyl-CoA. May function as an intracellular carrier of acyl-CoA esters. Plays a role in the biosynthesis of membrane lipids including galactolipids and phospholipids. This is Acyl-CoA-binding domain-containing protein 4 (ACBP4) from Arabidopsis thaliana (Mouse-ear cress).